Here is a 177-residue protein sequence, read N- to C-terminus: Large ribosomal subunit protein uL6 (177 aa).

Residues 151–177 (YRPPEPYKGKGIRYSDEHVVRKEAKKK) are disordered. Over residues 155-177 (EPYKGKGIRYSDEHVVRKEAKKK) the composition is skewed to basic and acidic residues.

Belongs to the universal ribosomal protein uL6 family. Part of the 50S ribosomal subunit.

In terms of biological role, this protein binds to the 23S rRNA, and is important in its secondary structure. It is located near the subunit interface in the base of the L7/L12 stalk, and near the tRNA binding site of the peptidyltransferase center. The protein is Large ribosomal subunit protein uL6 of Psychrobacter sp. (strain PRwf-1).